Here is a 153-residue protein sequence, read N- to C-terminus: SsrA-binding protein (153 aa).

The span at 133–143 (ADLKERDDKRQ) shows a compositional bias: basic and acidic residues. The disordered stretch occupies residues 133 to 153 (ADLKERDDKRQMQQALKQQQY). Over residues 144-153 (MQQALKQQQY) the composition is skewed to low complexity.

This sequence belongs to the SmpB family.

It is found in the cytoplasm. Its function is as follows. Required for rescue of stalled ribosomes mediated by trans-translation. Binds to transfer-messenger RNA (tmRNA), required for stable association of tmRNA with ribosomes. tmRNA and SmpB together mimic tRNA shape, replacing the anticodon stem-loop with SmpB. tmRNA is encoded by the ssrA gene; the 2 termini fold to resemble tRNA(Ala) and it encodes a 'tag peptide', a short internal open reading frame. During trans-translation Ala-aminoacylated tmRNA acts like a tRNA, entering the A-site of stalled ribosomes, displacing the stalled mRNA. The ribosome then switches to translate the ORF on the tmRNA; the nascent peptide is terminated with the 'tag peptide' encoded by the tmRNA and targeted for degradation. The ribosome is freed to recommence translation, which seems to be the essential function of trans-translation. The polypeptide is SsrA-binding protein (Protochlamydia amoebophila (strain UWE25)).